Reading from the N-terminus, the 243-residue chain is Venom nerve growth factor (243 aa).

Residues 1-18 form the signal peptide; the sequence is MSMLCYTLIIVFLIGIWA. Positions 19-125 are excised as a propeptide; it reads APKSEDNVPL…TLNRNIRAKR (107 aa). Residues 47–66 show a composition bias toward basic and acidic residues; it reads GLKTSRNTDQRHPAPKKAED. A disordered region spans residues 47 to 69; the sequence is GLKTSRNTDQRHPAPKKAEDQEL. Intrachain disulfides connect Cys139–Cys204, Cys182–Cys232, and Cys192–Cys234. The N-linked (GlcNAc...) asparagine glycan is linked to Asn148.

This sequence belongs to the NGF-beta family. As to quaternary structure, homodimer; non-covalently linked. Expressed by the venom gland.

The protein resides in the secreted. Functionally, nerve growth factor is important for the development and maintenance of the sympathetic and sensory nervous systems. It stimulates division and differentiation of sympathetic and embryonic sensory neurons as well as basal forebrain cholinergic neurons in the brain. Its relevance in the snake venom is not clear. However, it has been shown to inhibit metalloproteinase-dependent proteolysis of platelet glycoprotein Ib alpha, suggesting a metalloproteinase inhibition to prevent metalloprotease autodigestion and/or protection against prey proteases. Binds a lipid between the two protein chains in the homodimer. The lipid-bound form promotes histamine relase from mouse mast cells, contrary to the lipid-free form. This chain is Venom nerve growth factor, found in Oxyuranus scutellatus scutellatus (Australian taipan).